The chain runs to 396 residues: S-adenosylmethionine synthase (396 aa).

Position 16 (His16) interacts with ATP. Asp18 serves as a coordination point for Mg(2+). Glu44 is a K(+) binding site. L-methionine contacts are provided by Glu57 and Gln100. The interval 100-110 (QSPDINQGVDR) is flexible loop. ATP is bound by residues 165-167 (DAK), Asp240, 246-247 (RK), Ala263, and Lys267. Residue Asp240 coordinates L-methionine. An L-methionine-binding site is contributed by Lys271.

It belongs to the AdoMet synthase family. In terms of assembly, homotetramer; dimer of dimers. The cofactor is Mg(2+). Requires K(+) as cofactor.

It localises to the cytoplasm. It catalyses the reaction L-methionine + ATP + H2O = S-adenosyl-L-methionine + phosphate + diphosphate. Its pathway is amino-acid biosynthesis; S-adenosyl-L-methionine biosynthesis; S-adenosyl-L-methionine from L-methionine: step 1/1. In terms of biological role, catalyzes the formation of S-adenosylmethionine (AdoMet) from methionine and ATP. The overall synthetic reaction is composed of two sequential steps, AdoMet formation and the subsequent tripolyphosphate hydrolysis which occurs prior to release of AdoMet from the enzyme. The polypeptide is S-adenosylmethionine synthase (Pseudomonas fluorescens (strain SBW25)).